The sequence spans 162 residues: MPVDPAKLAALQKKSGAQSGGKGTPRRPGKKVAGRNISEDEKKLSATLKKFNAQEITGISEVNMFKEDGTVLHFPKVHVEGSVASNTFAISGPSQQKDIAELIPDILPQMGQDALLQLQQAAVQFSKLQEQAKKTAGGPDAAKEAGDDEIPNLVENFEDNVE.

Disordered regions lie at residues 1-39 and 130-162; these read MPVD…NISE and EQAK…DNVE. Positions 24-33 are enriched in basic residues; sequence TPRRPGKKVA. The region spanning 38–103 is the NAC-A/B domain; sequence SEDEKKLSAT…SQQKDIAELI (66 aa). The span at 146-162 shows a compositional bias: acidic residues; that stretch reads GDDEIPNLVENFEDNVE.

Belongs to the NAC-beta family. In terms of assembly, part of the nascent polypeptide-associated complex (NAC), consisting of EGD2 and EGD1. NAC associates with ribosomes via EGD1.

It is found in the cytoplasm. The protein resides in the nucleus. Functionally, component of the nascent polypeptide-associated complex (NAC), a dynamic component of the ribosomal exit tunnel, protecting the emerging polypeptides from interaction with other cytoplasmic proteins to ensure appropriate nascent protein targeting. The NAC complex also promotes mitochondrial protein import by enhancing productive ribosome interactions with the outer mitochondrial membrane and blocks the inappropriate interaction of ribosomes translating non-secretory nascent polypeptides with translocation sites in the membrane of the endoplasmic reticulum. EGD1 may act as a transcription factor that exert a negative effect on the expression of several genes that are transcribed by RNA polymerase II. The sequence is that of Nascent polypeptide-associated complex subunit beta (EGD1) from Yarrowia lipolytica (strain CLIB 122 / E 150) (Yeast).